The following is a 415-amino-acid chain: MFS-type transporter FVEG_12626 (415 aa).

Over residues 1–18 the composition is skewed to basic and acidic residues; that stretch reads MDPDTEQMRVEKPNHEQP. The tract at residues 1-22 is disordered; that stretch reads MDPDTEQMRVEKPNHEQPKPNT. A run of 6 helical transmembrane segments spans residues 27–47, 63–83, 93–113, 118–138, 151–171, and 178–198; these read GGFKAWSVVVGAFCGLFVGVF, TVSWIPAISMFIMFITGPFVG, YLLLAGTLLHVFGLMMASISS, YILSQAICSPLGAAMVLYPSF, LALGITASGSSLGGTILPIVV, and IGFGWTMRACAFLLLGLLLVT. Residue Asn-199 is glycosylated (N-linked (GlcNAc...) asparagine). 6 helical membrane-spanning segments follow: residues 227–247, 264–284, 290–310, 318–338, 354–374, and 386–406; these read FILTSLAGFFYSMGMFIPITF, YLVSIFNASSGIGRILPGYIA, FNVSIAAATLSTIFMLGLWLP, IAFAALFGFSSGTYTAISPAL, TMYAFMSVAALTGSPIGGALI, and VFAGCMLGAGTVFYVLARLYI.

This sequence belongs to the major facilitator superfamily. Monocarboxylate porter (TC 2.A.1.13) family.

The protein localises to the membrane. Functionally, MFS-type transporter; part of the Fusarium detoxification of benzoxazolinone cluster 2 (FDB2) involved in the degradation of benzoxazolinones produced by the host plant. Maize, wheat, and rye produce the 2 benzoxazinone phytoanticipins 2,4-dihy-droxy-7-methoxy-1,4-benzoxazin-3-one (DIMBOA) and 2,4-dihydroxy-1,4-benzoxazin-3-one (DIBOA) that, due to their inherent instability once released, spontaneously degrade to the more stable corresponding benzoxazolinones, 6-methoxy-2-benzoxazolinone (MBOA) and 2-benzoxazolinone (BOA), respectively. This is MFS-type transporter FVEG_12626 from Gibberella moniliformis (strain M3125 / FGSC 7600) (Maize ear and stalk rot fungus).